The primary structure comprises 135 residues: Large ribosomal subunit protein uL16c (135 aa).

Residues 1–17 (MLSPKRTKFRKQHRNRM) show a composition bias toward basic residues. Residues 1-22 (MLSPKRTKFRKQHRNRMNGKAS) form a disordered region.

It belongs to the universal ribosomal protein uL16 family. As to quaternary structure, part of the 50S ribosomal subunit.

The protein resides in the plastid. It localises to the chloroplast. This is Large ribosomal subunit protein uL16c from Gracilaria tenuistipitata (Red alga).